The primary structure comprises 856 residues: Phosphatidylglycerol lysyltransferase (856 aa).

The next 13 membrane-spanning stretches (helical) occupy residues 7–27 (ALSI…IYQS), 51–71 (LFML…YDYV), 88–108 (VSWI…AGVG), 128–148 (IAWL…FVAA), 161–181 (PWLW…LAVS), 208–228 (SVVE…AMGI), 235–255 (VFGV…PGGF), 280–300 (IVLY…FFAA), 342–362 (SLSL…SLPI), 375–395 (ALLL…ILPI), 420–440 (FLKG…VLLV), 459–479 (IFAV…AGFI), and 501–521 (HATI…TVVY).

It belongs to the LPG synthase family.

It localises to the cell membrane. It carries out the reaction L-lysyl-tRNA(Lys) + a 1,2-diacyl-sn-glycero-3-phospho-(1'-sn-glycerol) = a 1,2-diacyl-sn-glycero-3-phospho-1'-(3'-O-L-lysyl)-sn-glycerol + tRNA(Lys). Functionally, catalyzes the transfer of a lysyl group from L-lysyl-tRNA(Lys) to membrane-bound phosphatidylglycerol (PG), which produces lysylphosphatidylglycerol (LPG), one of the components of the bacterial membrane with a positive net charge. LPG synthesis contributes to the resistance to cationic antimicrobial peptides (CAMPs) and likely protects B.subtilis against its own CAMPs and against those produced by competiting microorganisms (bacteriocins). In fact, the modification of anionic phosphatidylglycerol with positively charged L-lysine results in repulsion of the peptides. In Bacillus subtilis (strain 168), this protein is Phosphatidylglycerol lysyltransferase (mprF).